The sequence spans 368 residues: GDP-fucose transporter 1 (368 aa).

Transmembrane regions (helical) follow at residues 64–84 (LSTIASVIAFYFFISISLVFL), 98–118 (LFITWYQQIISFVSIYIMTSI), 141–161 (VLPVTAVLTGMVIFNNLCLEY), 166–186 (FYQVARSLTICFSLILTYIVL), 195–215 (TMACLVVFLGFVLGSAGEVNF), 217–237 (WLGIIFGLLSSFFVALYSIAV), 251–271 (LSIYNTAISIGLIFPLILVSG), 287–307 (FWFYMTVAGLMGYLISISVFM), and 332–352 (AVVFWGNPISTQNAVGILLVI).

The protein belongs to the TPT transporter family. SLC35C subfamily.

The protein resides in the golgi apparatus membrane. The enzyme catalyses GMP(out) + GDP-beta-L-fucose(in) = GMP(in) + GDP-beta-L-fucose(out). Functionally, antiporter specific for GDP-l-fucose and depending on the concomitant reverse transport of GMP. Involved in GDP-fucose import from the cytoplasm into the Golgi lumen. The protein is GDP-fucose transporter 1 (slc35c1) of Dictyostelium discoideum (Social amoeba).